Here is a 288-residue protein sequence, read N- to C-terminus: Hemin import ATP-binding protein HmuV (288 aa).

The ABC transporter domain maps to 31–269 (LRARGLVVER…DLLTRVYQHP (239 aa)). 68 to 75 (GPNGAGKS) is a binding site for ATP.

The protein belongs to the ABC transporter superfamily. Heme (hemin) importer (TC 3.A.1.14.5) family. In terms of assembly, the complex is composed of two ATP-binding proteins (HmuV), two transmembrane proteins (HmuU) and a solute-binding protein (HmuT).

The protein localises to the cell membrane. Functionally, part of the ABC transporter complex HmuTUV involved in hemin import. Responsible for energy coupling to the transport system. The sequence is that of Hemin import ATP-binding protein HmuV from Nocardia farcinica (strain IFM 10152).